Here is a 495-residue protein sequence, read N- to C-terminus: Carbohydrate oxidase (495 aa).

A signal peptide spans 1-22; it reads MRSAFILALGLITASADALVTR. Positions 55 to 229 constitute an FAD-binding PCMH-type domain; it reads LPYIPTAIAQ…AVWKLATFPA (175 aa). The segment at residues 92–154 is a cross-link (6-(S-cysteinyl)-8alpha-(pros-histidyl)-FAD (His-Cys)); the sequence is HSYASFGFGG…YGRAISHGTC (63 aa). Residues Asn-244 and Asn-417 are each glycosylated (N-linked (GlcNAc...) asparagine).

It belongs to the oxygen-dependent FAD-linked oxidoreductase family. It depends on FAD as a cofactor. Post-translationally, the FAD cofactor is bound via a bicovalent 6-S-cysteinyl, 8alpha-N1-histidyl FAD linkage.

The protein localises to the secreted. The catalysed reaction is beta-D-glucose + O2 = D-glucono-1,5-lactone + H2O2. It catalyses the reaction D-galactose + O2 = D-galactono-1,5-lactone + H2O2. It carries out the reaction D-cellobiose + O2 = D-cellobiono-1,5-lactone + H2O2. The enzyme catalyses beta-lactose + O2 = lactobiono-1,5-lactone + H2O2. The catalysed reaction is D-maltose + O2 = D-maltobiono-1,5-lactone + H2O2. It catalyses the reaction D-xylose + O2 = D-xylono-1,5-lactone + H2O2. Catalyzes the selective oxidation of C1 hydroxyl moieties on mono-, oligo- and polysaccharides with concomitant reduction of molecular oxygen to hydrogen peroxide. This results in the formation of the corresponding lactones, which typically undergo spontaneous hydrolysis. Carbohydrate oxidase is able to oxidize a variety of substrates including D-glucose, D-galactose, D-xylose, D-maltose, D-cellobiose, and lactose. In addition, among various oligosaccharides, the enzyme preferred tetrameric dextrins, indicating a favorable interaction of four linked glucose units with the substrate binding pocket. The polypeptide is Carbohydrate oxidase (Microdochium nivale (Pink snow mold)).